Here is a 141-residue protein sequence, read N- to C-terminus: Protein stum homolog (141 aa).

Residue serine 26 is modified to Phosphoserine. 2 consecutive transmembrane segments (helical) span residues 51 to 71 and 87 to 107; these read FPVAVICLFLNTFVPGLGTFV and RHVCCVFWLNIAAALIQILTA.

Belongs to the SPEC3 family. Stum subfamily.

It localises to the membrane. The chain is Protein stum homolog from Homo sapiens (Human).